The primary structure comprises 196 residues: Putative 3-methyladenine DNA glycosylase (196 aa).

This sequence belongs to the DNA glycosylase MPG family.

The sequence is that of Putative 3-methyladenine DNA glycosylase from Chlorobium luteolum (strain DSM 273 / BCRC 81028 / 2530) (Pelodictyon luteolum).